Here is a 188-residue protein sequence, read N- to C-terminus: Adenylate kinase (188 aa).

11–16 (GAGKGT) is a binding site for ATP. The tract at residues 31-60 (STGDIFRANIKDQTELGREAQRYTDAGNLV) is NMP. Residues Thr32, Arg37, 58-60 (NLV), 86-89 (GYPR), and Gln93 contribute to the AMP site. Residues 127–137 (GRAQEQGRTDD) are LID. Arg128 is an ATP binding site. AMP-binding residues include Arg134 and Arg145. ATP is bound at residue Gly173.

This sequence belongs to the adenylate kinase family. Monomer.

It localises to the cytoplasm. The catalysed reaction is AMP + ATP = 2 ADP. It participates in purine metabolism; AMP biosynthesis via salvage pathway; AMP from ADP: step 1/1. Catalyzes the reversible transfer of the terminal phosphate group between ATP and AMP. Plays an important role in cellular energy homeostasis and in adenine nucleotide metabolism. The protein is Adenylate kinase of Kocuria rhizophila (strain ATCC 9341 / DSM 348 / NBRC 103217 / DC2201).